Consider the following 243-residue polypeptide: Pyridoxine 5'-phosphate synthase (243 aa).

Residue Asn9 coordinates 3-amino-2-oxopropyl phosphate. 11–12 contacts 1-deoxy-D-xylulose 5-phosphate; sequence DH. Arg20 provides a ligand contact to 3-amino-2-oxopropyl phosphate. The active-site Proton acceptor is His45. 1-deoxy-D-xylulose 5-phosphate is bound by residues Arg47 and His52. Catalysis depends on Glu72, which acts as the Proton acceptor. Position 102 (Thr102) interacts with 1-deoxy-D-xylulose 5-phosphate. Catalysis depends on His193, which acts as the Proton donor. 3-amino-2-oxopropyl phosphate-binding positions include Gly194 and 215 to 216; that span reads GH.

This sequence belongs to the PNP synthase family. In terms of assembly, homooctamer; tetramer of dimers.

The protein resides in the cytoplasm. It carries out the reaction 3-amino-2-oxopropyl phosphate + 1-deoxy-D-xylulose 5-phosphate = pyridoxine 5'-phosphate + phosphate + 2 H2O + H(+). It functions in the pathway cofactor biosynthesis; pyridoxine 5'-phosphate biosynthesis; pyridoxine 5'-phosphate from D-erythrose 4-phosphate: step 5/5. Functionally, catalyzes the complicated ring closure reaction between the two acyclic compounds 1-deoxy-D-xylulose-5-phosphate (DXP) and 3-amino-2-oxopropyl phosphate (1-amino-acetone-3-phosphate or AAP) to form pyridoxine 5'-phosphate (PNP) and inorganic phosphate. This is Pyridoxine 5'-phosphate synthase from Escherichia coli O157:H7.